The chain runs to 360 residues: Isopentenyl-diphosphate delta-isomerase (360 aa).

Residue 12 to 13 (RK) participates in substrate binding. FMN contacts are provided by residues 69 to 71 (SMT), S99, and N130. 99–101 (SQR) provides a ligand contact to substrate. Q164 provides a ligand contact to substrate. Residue E165 participates in Mg(2+) binding. FMN contacts are provided by residues K196, T226, 277–279 (GVR), and 298–299 (AK).

Belongs to the IPP isomerase type 2 family. In terms of assembly, homooctamer. Dimer of tetramers. The cofactor is FMN. NADPH is required as a cofactor. Requires Mg(2+) as cofactor.

It is found in the cytoplasm. It catalyses the reaction isopentenyl diphosphate = dimethylallyl diphosphate. In terms of biological role, involved in the biosynthesis of isoprenoids. Catalyzes the 1,3-allylic rearrangement of the homoallylic substrate isopentenyl (IPP) to its allylic isomer, dimethylallyl diphosphate (DMAPP). The polypeptide is Isopentenyl-diphosphate delta-isomerase (Halobacterium salinarum (strain ATCC 700922 / JCM 11081 / NRC-1) (Halobacterium halobium)).